A 237-amino-acid polypeptide reads, in one-letter code: Ergosterol biosynthesis protein 29 (237 aa).

The chain crosses the membrane as a helical span at residues 36–56 (ITLFLIVVGTLAFFNELYITI).

The protein resides in the endoplasmic reticulum membrane. Its function is as follows. Part of the third module of ergosterol biosynthesis pathway that includes the late steps of the pathway. ERG29 regulates the activity of the iron-containing C4-methylsterol oxidase ERG25. The third module or late pathway involves the ergosterol synthesis itself through consecutive reactions that mainly occur in the endoplasmic reticulum (ER) membrane. Firstly, the squalene synthase ERG9 catalyzes the condensation of 2 farnesyl pyrophosphate moieties to form squalene, which is the precursor of all steroids. Squalene synthase is crucial for balancing the incorporation of farnesyl diphosphate (FPP) into sterol and nonsterol isoprene synthesis. Secondly, the squalene epoxidase ERG1 catalyzes the stereospecific oxidation of squalene to (S)-2,3-epoxysqualene, which is considered to be a rate-limiting enzyme in steroid biosynthesis. Then, the lanosterol synthase ERG7 catalyzes the cyclization of (S)-2,3 oxidosqualene to lanosterol, a reaction that forms the sterol core. In the next steps, lanosterol is transformed to zymosterol through a complex process involving various demethylation, reduction and desaturation reactions. The lanosterol 14-alpha-demethylase ERG11 (also known as CYP51) catalyzes C14-demethylation of lanosterol to produce 4,4'-dimethyl cholesta-8,14,24-triene-3-beta-ol, which is critical for ergosterol biosynthesis. The C-14 reductase ERG24 reduces the C14=C15 double bond of 4,4-dimethyl-cholesta-8,14,24-trienol to produce 4,4-dimethyl-cholesta-8,24-dienol. 4,4-dimethyl-cholesta-8,24-dienol is substrate of the C-4 demethylation complex ERG25-ERG26-ERG27 in which ERG25 catalyzes the three-step monooxygenation required for the demethylation of 4,4-dimethyl and 4alpha-methylsterols, ERG26 catalyzes the oxidative decarboxylation that results in a reduction of the 3-beta-hydroxy group at the C-3 carbon to an oxo group, and ERG27 is responsible for the reduction of the keto group on the C-3. ERG28 has a role as a scaffold to help anchor ERG25, ERG26 and ERG27 to the endoplasmic reticulum and ERG29 regulates the activity of the iron-containing C4-methylsterol oxidase ERG25. Then, the sterol 24-C-methyltransferase ERG6 catalyzes the methyl transfer from S-adenosyl-methionine to the C-24 of zymosterol to form fecosterol. The C-8 sterol isomerase ERG2 catalyzes the reaction which results in unsaturation at C-7 in the B ring of sterols and thus converts fecosterol to episterol. The sterol-C5-desaturase ERG3 then catalyzes the introduction of a C-5 double bond in the B ring to produce 5-dehydroepisterol. The C-22 sterol desaturase ERG5 further converts 5-dehydroepisterol into ergosta-5,7,22,24(28)-tetraen-3beta-ol by forming the C-22(23) double bond in the sterol side chain. Finally, ergosta-5,7,22,24(28)-tetraen-3beta-ol is substrate of the C-24(28) sterol reductase ERG4 to produce ergosterol. In terms of biological role, plays a role in maintaining mitochondrial and plasma membrane integrity and consequently impacting the iron homeostasis, respiratory metabolism and antioxidant response. The protein is Ergosterol biosynthesis protein 29 of Saccharomyces cerevisiae (strain ATCC 204508 / S288c) (Baker's yeast).